A 238-amino-acid polypeptide reads, in one-letter code: Probable 2-phosphosulfolactate phosphatase (238 aa).

Belongs to the ComB family. Mg(2+) is required as a cofactor.

The enzyme catalyses (2R)-O-phospho-3-sulfolactate + H2O = (2R)-3-sulfolactate + phosphate. This Carboxydothermus hydrogenoformans (strain ATCC BAA-161 / DSM 6008 / Z-2901) protein is Probable 2-phosphosulfolactate phosphatase.